The following is a 203-amino-acid chain: Glycerol-3-phosphate acyltransferase (203 aa).

Helical transmembrane passes span 12 to 32 (ATLLCLAFGYLLGSIPFGLIL), 66 to 86 (TLLLDALKGTAAAAIASLWGV), 88 to 108 (AGIAAGLAAFLGHLFPVWLSF), 118 to 138 (IGVLLGLAPLMVPAFAAIWLA), and 159 to 179 (IALYATGYGKVALLFALMTVI).

It belongs to the PlsY family. In terms of assembly, probably interacts with PlsX.

Its subcellular location is the cell inner membrane. It catalyses the reaction an acyl phosphate + sn-glycerol 3-phosphate = a 1-acyl-sn-glycero-3-phosphate + phosphate. Its pathway is lipid metabolism; phospholipid metabolism. Its function is as follows. Catalyzes the transfer of an acyl group from acyl-phosphate (acyl-PO(4)) to glycerol-3-phosphate (G3P) to form lysophosphatidic acid (LPA). This enzyme utilizes acyl-phosphate as fatty acyl donor, but not acyl-CoA or acyl-ACP. The chain is Glycerol-3-phosphate acyltransferase from Sinorhizobium fredii (strain NBRC 101917 / NGR234).